A 288-amino-acid chain; its full sequence is 4-diphosphocytidyl-2-C-methyl-D-erythritol kinase (288 aa).

The active site involves lysine 8. 90–100 (PFGAGLGGGSS) lines the ATP pocket. Aspartate 132 is an active-site residue.

Belongs to the GHMP kinase family. IspE subfamily.

It catalyses the reaction 4-CDP-2-C-methyl-D-erythritol + ATP = 4-CDP-2-C-methyl-D-erythritol 2-phosphate + ADP + H(+). It functions in the pathway isoprenoid biosynthesis; isopentenyl diphosphate biosynthesis via DXP pathway; isopentenyl diphosphate from 1-deoxy-D-xylulose 5-phosphate: step 3/6. In terms of biological role, catalyzes the phosphorylation of the position 2 hydroxy group of 4-diphosphocytidyl-2C-methyl-D-erythritol. This Chlorobium chlorochromatii (strain CaD3) protein is 4-diphosphocytidyl-2-C-methyl-D-erythritol kinase.